A 448-amino-acid polypeptide reads, in one-letter code: tRNA wybutosine-synthesizing protein 2 homolog (448 aa).

S-adenosyl-L-methionine contacts are provided by residues serine 218, lysine 225, glutamate 265, and aspartate 293–asparagine 294.

The protein belongs to the class I-like SAM-binding methyltransferase superfamily. TRM5/TYW2 family.

The catalysed reaction is 4-demethylwyosine(37) in tRNA(Phe) + S-adenosyl-L-methionine = 4-demethyl-7-[(3S)-3-amino-3-carboxypropyl]wyosine(37) in tRNA(Phe) + S-methyl-5'-thioadenosine + H(+). Its pathway is tRNA modification; wybutosine-tRNA(Phe) biosynthesis. Functionally, S-adenosyl-L-methionine-dependent transferase that acts as a component of the wybutosine biosynthesis pathway. Wybutosine is a hyper modified guanosine with a tricyclic base found at the 3'-position adjacent to the anticodon of eukaryotic phenylalanine tRNA. Catalyzes the transfer of the alpha-amino-alpha-carboxypropyl (acp) group from S-adenosyl-L-methionine to the C-7 position of 4-demethylwyosine (imG-14) to produce wybutosine-86. This is tRNA wybutosine-synthesizing protein 2 homolog (TRMT12) from Homo sapiens (Human).